The following is a 261-amino-acid chain: Triosephosphate isomerase (261 aa).

10–12 provides a ligand contact to substrate; that stretch reads NWK. Residue histidine 100 is the Electrophile of the active site. Glutamate 172 (proton acceptor) is an active-site residue. Substrate-binding positions include glycine 178, serine 218, and 239-240; that span reads GG.

The protein belongs to the triosephosphate isomerase family. As to quaternary structure, homodimer.

It localises to the cytoplasm. It carries out the reaction D-glyceraldehyde 3-phosphate = dihydroxyacetone phosphate. The protein operates within carbohydrate biosynthesis; gluconeogenesis. It participates in carbohydrate degradation; glycolysis; D-glyceraldehyde 3-phosphate from glycerone phosphate: step 1/1. Its function is as follows. Involved in the gluconeogenesis. Catalyzes stereospecifically the conversion of dihydroxyacetone phosphate (DHAP) to D-glyceraldehyde-3-phosphate (G3P). The protein is Triosephosphate isomerase of Mycobacterium avium (strain 104).